Reading from the N-terminus, the 558-residue chain is Potassium-transporting ATPase potassium-binding subunit (558 aa).

12 consecutive transmembrane segments (helical) span residues 1–21 (MSIV…SRYL), 60–80 (IKHF…LLLI), 129–149 (VITF…IAML), 169–189 (FIVR…ISQG), 246–266 (WSNY…VFLF), 281–301 (IMIF…CLYF), 326–346 (FGIG…TGTV), 353–373 (LTPL…VFGG), 376–396 (VGLM…SLMI), 415–435 (IALS…LAFI), 485–505 (IVML…VSSL), and 523–543 (LFFS…TFLP).

It belongs to the KdpA family. As to quaternary structure, the system is composed of three essential subunits: KdpA, KdpB and KdpC.

The protein resides in the cell membrane. In terms of biological role, part of the high-affinity ATP-driven potassium transport (or Kdp) system, which catalyzes the hydrolysis of ATP coupled with the electrogenic transport of potassium into the cytoplasm. This subunit binds the extracellular potassium ions and delivers the ions to the membrane domain of KdpB through an intramembrane tunnel. The protein is Potassium-transporting ATPase potassium-binding subunit of Staphylococcus haemolyticus (strain JCSC1435).